The chain runs to 204 residues: MATLTAKERTDFTRSSLRNIRTSGHVPGIIYGKDTGNKPVSLDSVELIKTLRDEGKNAVITLEVSGEKHSVMVTDLQTDPLKNEITHADFQVVNMSEDIEVEVPIHLTGEAIGVKNGGVLQQPLYALTVKAKPKAIPQTIEADISSLDVNEVLTIADLPAGGDYSFNHESDEVVASILPPQQQEAAEVDEEESADAQPEGENEQ.

The interval 177–204 is disordered; that stretch reads ILPPQQQEAAEVDEEESADAQPEGENEQ. Residues 186 to 204 are compositionally biased toward acidic residues; the sequence is AEVDEEESADAQPEGENEQ.

It belongs to the bacterial ribosomal protein bL25 family. CTC subfamily. As to quaternary structure, part of the ribosome (presumably the 50S subunit) under heat-stress but not control growth conditions. Binds 5S rRNA.

Its function is as follows. Not required for exponential growth; probably functions in vegetatively growing cells, maybe required for accurate translation under stress conditions. This Bacillus subtilis (strain 168) protein is General stress protein Ctc.